A 229-amino-acid chain; its full sequence is MKSLLPISSLLVLLGSASAFAADLNIPMSFEYLALDGKKVESSVFNHKSSLELTPGTHKIAIRYHEMVEDDFSDSQTFVKSAPFIVTLDVDGDYQYYLQAAEGKVVKKPKVYAQNPQIKLTRGDKGDVNFQVVNTNLEEESFVSRLFSGNQAVDVSGTAAAATGAAGAVVAVAPAPVATSATVSATSLTAPVDTSKATAANPQQMLQYWWLQADEKTRKEFMSWAISQL.

Positions 1–21 (MKSLLPISSLLVLLGSASAFA) are cleaved as a signal peptide.

This sequence belongs to the UPF0319 family.

The sequence is that of UPF0319 protein Sbal223_2728 from Shewanella baltica (strain OS223).